The sequence spans 97 residues: Signal recognition particle 19 kDa protein (97 aa).

Belongs to the SRP19 family. In terms of assembly, part of the signal recognition particle protein translocation system, which is composed of SRP and FtsY. Archaeal SRP consists of a 7S RNA molecule of 300 nucleotides and two protein subunits: SRP54 and SRP19.

The protein localises to the cytoplasm. Functionally, involved in targeting and insertion of nascent membrane proteins into the cytoplasmic membrane. Binds directly to 7S RNA and mediates binding of the 54 kDa subunit of the SRP. The protein is Signal recognition particle 19 kDa protein of Pyrobaculum calidifontis (strain DSM 21063 / JCM 11548 / VA1).